Consider the following 474-residue polypeptide: Bifunctional protein HldE (474 aa).

A ribokinase region spans residues M1 to E318. N194–E197 contributes to the ATP binding site. D263 is a catalytic residue. The tract at residues F343–G474 is cytidylyltransferase.

The protein in the N-terminal section; belongs to the carbohydrate kinase PfkB family. In the C-terminal section; belongs to the cytidylyltransferase family. Homodimer.

It catalyses the reaction D-glycero-beta-D-manno-heptose 7-phosphate + ATP = D-glycero-beta-D-manno-heptose 1,7-bisphosphate + ADP + H(+). It carries out the reaction D-glycero-beta-D-manno-heptose 1-phosphate + ATP + H(+) = ADP-D-glycero-beta-D-manno-heptose + diphosphate. It functions in the pathway nucleotide-sugar biosynthesis; ADP-L-glycero-beta-D-manno-heptose biosynthesis; ADP-L-glycero-beta-D-manno-heptose from D-glycero-beta-D-manno-heptose 7-phosphate: step 1/4. The protein operates within nucleotide-sugar biosynthesis; ADP-L-glycero-beta-D-manno-heptose biosynthesis; ADP-L-glycero-beta-D-manno-heptose from D-glycero-beta-D-manno-heptose 7-phosphate: step 3/4. Catalyzes the phosphorylation of D-glycero-D-manno-heptose 7-phosphate at the C-1 position to selectively form D-glycero-beta-D-manno-heptose-1,7-bisphosphate. In terms of biological role, catalyzes the ADP transfer from ATP to D-glycero-beta-D-manno-heptose 1-phosphate, yielding ADP-D-glycero-beta-D-manno-heptose. In Pseudomonas aeruginosa (strain UCBPP-PA14), this protein is Bifunctional protein HldE.